Here is a 426-residue protein sequence, read N- to C-terminus: Elongation factor 1-alpha (426 aa).

In terms of domain architecture, tr-type G spans 5–221 (KPHMNLAVIG…DTFKEPDKPT (217 aa)). Residues 14 to 21 (GHIDHGKS) form a G1 region. A GTP-binding site is contributed by 14-21 (GHIDHGKS). Ser-21 serves as a coordination point for Mg(2+). The segment at 70–74 (GITID) is G2. Residues 91-94 (DCPG) form a G3 region. GTP-binding positions include 91–95 (DCPGH) and 146–149 (NKMD). A G4 region spans residues 146-149 (NKMD). The interval 185–187 (SSF) is G5.

This sequence belongs to the TRAFAC class translation factor GTPase superfamily. Classic translation factor GTPase family. EF-Tu/EF-1A subfamily.

The protein localises to the cytoplasm. The enzyme catalyses GTP + H2O = GDP + phosphate + H(+). Functionally, GTP hydrolase that promotes the GTP-dependent binding of aminoacyl-tRNA to the A-site of ribosomes during protein biosynthesis. The protein is Elongation factor 1-alpha of Methanosphaerula palustris (strain ATCC BAA-1556 / DSM 19958 / E1-9c).